The primary structure comprises 257 residues: 6-phosphogluconolactonase (257 aa).

N-acetylalanine is present on Ala2. Ser49 carries the phosphoserine modification. Lys180 carries the N6-acetyllysine modification.

The protein belongs to the glucosamine/galactosamine-6-phosphate isomerase family. 6-phosphogluconolactonase subfamily.

The protein resides in the cytoplasm. It carries out the reaction 6-phospho-D-glucono-1,5-lactone + H2O = 6-phospho-D-gluconate + H(+). It functions in the pathway carbohydrate degradation; pentose phosphate pathway; D-ribulose 5-phosphate from D-glucose 6-phosphate (oxidative stage): step 2/3. Functionally, hydrolysis of 6-phosphogluconolactone to 6-phosphogluconate. The sequence is that of 6-phosphogluconolactonase from Rattus norvegicus (Rat).